A 243-amino-acid chain; its full sequence is 3-deoxy-manno-octulosonate cytidylyltransferase (243 aa).

The protein belongs to the KdsB family.

Its subcellular location is the cytoplasm. It carries out the reaction 3-deoxy-alpha-D-manno-oct-2-ulosonate + CTP = CMP-3-deoxy-beta-D-manno-octulosonate + diphosphate. It functions in the pathway nucleotide-sugar biosynthesis; CMP-3-deoxy-D-manno-octulosonate biosynthesis; CMP-3-deoxy-D-manno-octulosonate from 3-deoxy-D-manno-octulosonate and CTP: step 1/1. Its pathway is bacterial outer membrane biogenesis; lipopolysaccharide biosynthesis. Its function is as follows. Activates KDO (a required 8-carbon sugar) for incorporation into bacterial lipopolysaccharide in Gram-negative bacteria. The sequence is that of 3-deoxy-manno-octulosonate cytidylyltransferase from Helicobacter pylori (strain HPAG1).